The sequence spans 145 residues: Large ribosomal subunit protein bL35c (145 aa).

The transit peptide at 1 to 56 directs the protein to the chloroplast; the sequence is MASLSMASVNVSFCHPLRSSSPKVSLRSSVHFATSLSSSHSISGLRAVLPLKISTV.

This sequence belongs to the bacterial ribosomal protein bL35 family. In terms of assembly, part of the 50S ribosomal subunit.

Its subcellular location is the plastid. It is found in the chloroplast. In Arabidopsis thaliana (Mouse-ear cress), this protein is Large ribosomal subunit protein bL35c.